The following is a 264-amino-acid chain: Thiazole synthase (264 aa).

Catalysis depends on K106, which acts as the Schiff-base intermediate with DXP. 1-deoxy-D-xylulose 5-phosphate-binding positions include G167, 193–194, and 215–216; these read AG and NS.

The protein belongs to the ThiG family. In terms of assembly, homotetramer. Forms heterodimers with either ThiH or ThiS.

The protein resides in the cytoplasm. It carries out the reaction [ThiS sulfur-carrier protein]-C-terminal-Gly-aminoethanethioate + 2-iminoacetate + 1-deoxy-D-xylulose 5-phosphate = [ThiS sulfur-carrier protein]-C-terminal Gly-Gly + 2-[(2R,5Z)-2-carboxy-4-methylthiazol-5(2H)-ylidene]ethyl phosphate + 2 H2O + H(+). The protein operates within cofactor biosynthesis; thiamine diphosphate biosynthesis. In terms of biological role, catalyzes the rearrangement of 1-deoxy-D-xylulose 5-phosphate (DXP) to produce the thiazole phosphate moiety of thiamine. Sulfur is provided by the thiocarboxylate moiety of the carrier protein ThiS. In vitro, sulfur can be provided by H(2)S. The protein is Thiazole synthase of Stutzerimonas stutzeri (strain A1501) (Pseudomonas stutzeri).